We begin with the raw amino-acid sequence, 232 residues long: MVQTKRQKAIDLAVVPGKSYGIDEAIKILKTATKAKFIESVDVAIRLGVDVKKSDQQVRGSTLLPAGTGKAVRVAVFVPSGAKAEDALAAGADAVGMDDLAEKMQAGDLNYDVVIATPDAMRVVGKLGTLLGPRGLMPNPKVGTVSQNPGEAVKNAKSGQVRYRADKAGIIHCVIGKVSFDDEALKLNLQALLVDLIKIKPTASKGTYLQKVSLSSTMGPGVMIDQSTLSLK.

This sequence belongs to the universal ribosomal protein uL1 family. In terms of assembly, part of the 50S ribosomal subunit.

Binds directly to 23S rRNA. The L1 stalk is quite mobile in the ribosome, and is involved in E site tRNA release. In terms of biological role, protein L1 is also a translational repressor protein, it controls the translation of the L11 operon by binding to its mRNA. The sequence is that of Large ribosomal subunit protein uL1 from Xylella fastidiosa (strain M12).